The following is a 134-amino-acid chain: Spermadhesin-1 (134 aa).

Positions 1–20 (MKLSSVIPWALLLSTATVDS) are cleaved as a signal peptide. Intrachain disulfides connect C30-C51 and C74-C95. The 102-residue stretch at 30–131 (CGGILKEESG…SFYEVLYFQD (102 aa)) folds into the CUB domain.

This sequence belongs to the spermadhesin family. In terms of tissue distribution, seminal vesicle tissue, ampulla and weakly in tissue of epididymis.

It localises to the secreted. In terms of biological role, stimulates cell division and progesterone secretion of bovine granulosa cells in vitro in a potent and dose dependent manner. This protein appears to be a potent growth factor with effects on ovarian granulosa cells. This is Spermadhesin-1 (SPADH1) from Bos taurus (Bovine).